Consider the following 396-residue polypeptide: 1-deoxy-D-xylulose 5-phosphate reductoisomerase (396 aa).

Residues threonine 10, glycine 11, serine 12, isoleucine 13, and asparagine 123 each coordinate NADPH. Lysine 124 lines the 1-deoxy-D-xylulose 5-phosphate pocket. Residue glutamate 125 coordinates NADPH. Aspartate 149 is a binding site for Mn(2+). 1-deoxy-D-xylulose 5-phosphate contacts are provided by serine 150, glutamate 151, serine 185, and histidine 208. Position 151 (glutamate 151) interacts with Mn(2+). Glycine 214 is a binding site for NADPH. Serine 221, asparagine 226, lysine 227, and glutamate 230 together coordinate 1-deoxy-D-xylulose 5-phosphate. Glutamate 230 is a binding site for Mn(2+).

It belongs to the DXR family. Mg(2+) is required as a cofactor. Mn(2+) serves as cofactor.

The catalysed reaction is 2-C-methyl-D-erythritol 4-phosphate + NADP(+) = 1-deoxy-D-xylulose 5-phosphate + NADPH + H(+). Its pathway is isoprenoid biosynthesis; isopentenyl diphosphate biosynthesis via DXP pathway; isopentenyl diphosphate from 1-deoxy-D-xylulose 5-phosphate: step 1/6. Its function is as follows. Catalyzes the NADPH-dependent rearrangement and reduction of 1-deoxy-D-xylulose-5-phosphate (DXP) to 2-C-methyl-D-erythritol 4-phosphate (MEP). The polypeptide is 1-deoxy-D-xylulose 5-phosphate reductoisomerase (Shewanella baltica (strain OS155 / ATCC BAA-1091)).